Reading from the N-terminus, the 622-residue chain is MALLQISEPGQSPHPHQRRIAVGIDLGTTHSLVAAVRNGVSECLPDAQGRVLLPSVVRYLDQGGRQIGHEAVAAQVWDARNTIASVKRFMGRSLKDVARAGQLPYDFVPDAAAQGMLSLATVAGNKSPVEVSAEILAALRQRAEDSFNADLYGAVITVPAYFDDAQRQATKDAARLAGIPLLRLINEPTAAAIAYGLDNASEGIYAVYDLGGGTFDISILRLAQGVFEVIATGGDSALGGDDYDAALVDWVLQQARRQASTPADRAALRIAARACKQALSATDIAAFSADISCANVHVDVRRADFEAITADLTARSMAAVRRALRDAQLTRDQVQGVVLVGGATRMPQVQRAVAQFFGQPPLTNLNPDEVVALGAAIQAHQLAGNGGNAAELLLLDVIPLSLGVETMGGLVERIVARNEPIPTAKAQDFTTYKDGQTALAIHVVQGERDLVQDCRSLARFELRGIPPMVAGAARIRVTFAIDADGLLSVSAKEQGSGAQAHIDVKPSYGLSDEQIARMLQDSFATAAQDMKTRALVEARVDAERMLSATQSALAADGEMLSARERAAIEALMATLSAQREADDAAVIEAATEALAQGTQAFAARRMNRGIRQALAGRNVQTL.

It belongs to the heat shock protein 70 family.

Functionally, chaperone involved in the maturation of iron-sulfur cluster-containing proteins. Has a low intrinsic ATPase activity which is markedly stimulated by HscB. The sequence is that of Chaperone protein HscA homolog from Verminephrobacter eiseniae (strain EF01-2).